Here is a 263-residue protein sequence, read N- to C-terminus: Outer membrane lipoprotein 3 (263 aa).

An N-terminal signal peptide occupies residues 1–19; it reads MKIMKLAGAVAIFSLFLTA. The N-palmitoyl cysteine moiety is linked to residue C20. A lipid anchor (S-diacylglycerol cysteine) is attached at C20.

Belongs to the NlpA lipoprotein family.

It is found in the cell outer membrane. This is Outer membrane lipoprotein 3 (plpC) from Mannheimia haemolytica (Pasteurella haemolytica).